Reading from the N-terminus, the 793-residue chain is MKFKYGAIFFSGFLGLSAILAACGTKGKFDQVDDGKIKLASSLTSKSASKALQAIVKKYNEVKKPGDYPIEITQIAGGYDGGRSDLQTRVNVKDTTNFYNLILNYPDLVSTLGRVGMELPFDNVKVDKLSPRFLDFNNRISAISKPGIYGIPVSLSTEVLSINGPVLHYILNNAKKKEGTLNQKMTSSSEGKNSSGTLTVATDTETSSLWKKIEDSAKANGKSDEKGKGKKKDNKSATFSLVQLKQTQEKTDDSQDTKNSDDQVKKSWGEYQEVDGVLKNFEFKASIFENWHDLLDFSTRVAKSFKKIHENSNKKGNDIQGILGVDSTPNSLFTSVFAAGGGDYNNFFYKIENGRADFSNFKNKGTSYQNLQKVFGDFKGLIDKNGIFVNKGGSYSSNFQKFHQLAYSISSTSGFFYSFAGKSAKRLNFGDSFIEYPRFTQEIKAPSKNGENGQTNEGNSTNGEQNLLGTFEVKDDSKPKEEVKSNKNSGKESSQNQGKKSNNNKTIYLYETKIPDGKTAGDNAILIKDKNVIEKLKSAAKEENKEQTAEATKAAITSNKAKSTKKESSKVIGYTTTDSVREDGKNIFAIDRVNGENYDRKIIVGAKAETLNQSSTLQSEEAIVLPAPGKYLNGDPKKVTITQGPNIIGIHANEKENAETQKFVDWFLNSPQTWEKQSRDKKGSSEKQTAAEFFAESASYILPLKEIFDKNDTKTEKGKNSKTQQRTNTYAEKALELFKQISQNQIVSYSDPSDFRSGKFRDAIGATFNAAVSSKADFNKFVQNFTATLGSDI.

An N-terminal signal peptide occupies residues 1–22 (MKFKYGAIFFSGFLGLSAILAA). The N-palmitoyl cysteine moiety is linked to residue cysteine 23. The S-diacylglycerol cysteine moiety is linked to residue cysteine 23. Disordered regions lie at residues 181 to 200 (LNQKMTSSSEGKNSSGTLTV), 212 to 264 (KIED…DDQV), and 444 to 504 (KAPS…SNNN). Residues 212-227 (KIEDSAKANGKSDEKG) are compositionally biased toward basic and acidic residues. Residues 237–246 (ATFSLVQLKQ) are compositionally biased toward polar residues. The segment covering 247–264 (TQEKTDDSQDTKNSDDQV) has biased composition (basic and acidic residues). Positions 449–468 (NGENGQTNEGNSTNGEQNLL) are enriched in polar residues. The span at 472–485 (EVKDDSKPKEEVKS) shows a compositional bias: basic and acidic residues. Low complexity predominate over residues 491-504 (KESSQNQGKKSNNN).

Belongs to the MG185/MG260 family.

The protein resides in the cell membrane. This is an uncharacterized protein from Mycoplasma pneumoniae (strain ATCC 29342 / M129 / Subtype 1) (Mycoplasmoides pneumoniae).